Reading from the N-terminus, the 2377-residue chain is DNA (cytosine-5-)-methyltransferase DMT5 (2377 aa).

The interval 24–56 is disordered; that stretch reads GTADGAVNGGNIPNSQSQKRKRASPSPEIESEE. The Chromo; shadow subtype domain occupies 62 to 126; the sequence is YEIDYIADSR…KNPGKPRLSP (65 aa). The disordered stretch occupies residues 150–282; the sequence is GKSRAASSTD…KSSLPKAKLR (133 aa). The span at 201 to 213 shows a compositional bias: basic residues; it reads PTSKKVHPNKKCK. 2 stretches are compositionally biased toward acidic residues: residues 217-238 and 245-263; these read DDESDFVFEEGEWDEDEDDDND and EDDEDDEQERSAEEPESDE. A compositionally biased stretch (basic residues) spans 268–282; sequence PAKKTKSSLPKAKLR. Residues 347–753 enclose the SAM-dependent MTase C5-type domain; it reads LRVATMCSGT…IAALKVACHK (407 aa). The active site involves C440. Positions 1450 to 1771 constitute a Helicase ATP-binding domain; the sequence is AERPVMVRGG…RSIATFMGIH (322 aa). 1463 to 1470 serves as a coordination point for ATP; it reads DQVGYGKT. Disordered regions lie at residues 1642–1680, 2313–2334, and 2347–2377; these read KGQAYRDKHDSDSKAKPITKEELERWEASEDEDDDENSK, KGRGSSISMTNEKRTPTLTVKS, and SSFRSKKRSMEARDAEGVSDDDENSELSDII. Over residues 1645 to 1669 the composition is skewed to basic and acidic residues; the sequence is AYRDKHDSDSKAKPITKEELERWEA. Residues 2152–2315 form the Helicase C-terminal domain; the sequence is KLEHLVNLIH…EIPQEEYKGR (164 aa). A compositionally biased stretch (polar residues) spans 2317–2334; sequence SSISMTNEKRTPTLTVKS. Over residues 2363 to 2377 the composition is skewed to acidic residues; sequence GVSDDDENSELSDII.

The protein in the N-terminal section; belongs to the class I-like SAM-binding methyltransferase superfamily. C5-methyltransferase family. This sequence in the C-terminal section; belongs to the SNF2/RAD54 helicase family. In terms of assembly, interacts with SWI6. The cofactor is Mg(2+).

It is found in the nucleus. Its subcellular location is the chromosome. The catalysed reaction is a 2'-deoxycytidine in DNA + S-adenosyl-L-methionine + ATP + H2O = a 5-methyl-2'-deoxycytidine in DNA + S-adenosyl-L-homocysteine + ADP + phosphate + 2 H(+). With respect to regulation, hemimethylated DNA substrates stimulate ATP hydrolysis and this is a prerequisite for methyltransferase activity. Its function is as follows. ATP-dependent cytosine methylase that maintains DNA methylation by acting at hemimethylated palindromic 5'-CG-3' sites to produce symmetrically methylated DNA strands. DNA methylation may play a role in transcriptional silencing, particularly at transposable elements. This Cryptococcus neoformans var. grubii serotype A (strain H99 / ATCC 208821 / CBS 10515 / FGSC 9487) (Filobasidiella neoformans var. grubii) protein is DNA (cytosine-5-)-methyltransferase DMT5.